The primary structure comprises 470 residues: L-seryl-tRNA(Sec) selenium transferase (470 aa).

N6-(pyridoxal phosphate)lysine is present on K294.

It belongs to the SelA family. Requires pyridoxal 5'-phosphate as cofactor.

The protein localises to the cytoplasm. The catalysed reaction is L-seryl-tRNA(Sec) + selenophosphate + H(+) = L-selenocysteinyl-tRNA(Sec) + phosphate. It participates in aminoacyl-tRNA biosynthesis; selenocysteinyl-tRNA(Sec) biosynthesis; selenocysteinyl-tRNA(Sec) from L-seryl-tRNA(Sec) (bacterial route): step 1/1. Converts seryl-tRNA(Sec) to selenocysteinyl-tRNA(Sec) required for selenoprotein biosynthesis. This chain is L-seryl-tRNA(Sec) selenium transferase, found in Solidesulfovibrio magneticus (strain ATCC 700980 / DSM 13731 / RS-1) (Desulfovibrio magneticus).